The primary structure comprises 389 residues: S-adenosylmethionine synthase (389 aa).

His17 contacts ATP. Asp19 contacts Mg(2+). Position 45 (Glu45) interacts with K(+). L-methionine contacts are provided by Glu58 and Gln102. Residues Gln102–Ala112 form a flexible loop region. ATP contacts are provided by residues Asp167–Lys169, Asp241, Arg247–Lys248, Ala264, and Lys268. Residue Asp241 coordinates L-methionine. Residue Lys272 coordinates L-methionine.

It belongs to the AdoMet synthase family. Homotetramer; dimer of dimers. Mg(2+) is required as a cofactor. It depends on K(+) as a cofactor.

The protein resides in the cytoplasm. It catalyses the reaction L-methionine + ATP + H2O = S-adenosyl-L-methionine + phosphate + diphosphate. It functions in the pathway amino-acid biosynthesis; S-adenosyl-L-methionine biosynthesis; S-adenosyl-L-methionine from L-methionine: step 1/1. Functionally, catalyzes the formation of S-adenosylmethionine (AdoMet) from methionine and ATP. The overall synthetic reaction is composed of two sequential steps, AdoMet formation and the subsequent tripolyphosphate hydrolysis which occurs prior to release of AdoMet from the enzyme. This Parvibaculum lavamentivorans (strain DS-1 / DSM 13023 / NCIMB 13966) protein is S-adenosylmethionine synthase.